Reading from the N-terminus, the 323-residue chain is Extracellular endo-alpha-(1-&gt;5)-L-arabinanase 1 (323 aa).

The N-terminal stretch at methionine 1 to alanine 32 is a signal peptide. Aspartate 44 functions as the Proton acceptor in the catalytic mechanism. Position 44 (aspartate 44) interacts with substrate. Aspartate 107 lines the Ca(2+) pocket. Substrate is bound by residues glycine 125 and asparagine 160–aspartate 163. Residue glutamate 165 coordinates Ca(2+). Serine 180–tryptophan 182 serves as a coordination point for substrate. Glutamate 215 (proton donor) is an active-site residue. Aspartate 287 provides a ligand contact to Ca(2+).

It belongs to the glycosyl hydrolase 43 family. Requires Ca(2+) as cofactor.

Its subcellular location is the secreted. The catalysed reaction is Endohydrolysis of (1-&gt;5)-alpha-arabinofuranosidic linkages in (1-&gt;5)-arabinans.. Its pathway is glycan metabolism; L-arabinan degradation. Functionally, involved in the degradation of arabinan and is a key enzyme in the complete degradation of the plant cell wall. Catalyzes the internal cleavage of alpha-(1-&gt;5)-L-arabinofuranosyl residues of linear 1,5-alpha-L-arabinan and of branched sugar beet arabinan. It displays no activity against heavily substituted arabinans or a range of other polysaccharides (larch wood arabinogalactan, wheat arabinoxylan and p-nitrophenyl-alpha-L-arabinofuranoside). The enzyme activity is progressively reduced as alpha-(1-&gt;5)-chains become shorter or more highly substituted. The protein is Extracellular endo-alpha-(1-&gt;5)-L-arabinanase 1 (abnA) of Bacillus subtilis (strain 168).